A 394-amino-acid chain; its full sequence is Elongation factor Tu (394 aa).

Residues 10 to 204 enclose the tr-type G domain; sequence KEHANIGTIG…AVDDYIPTPE (195 aa). Residues 19 to 26 are G1; the sequence is GHVDHGKT. 19-26 is a GTP binding site; it reads GHVDHGKT. Mg(2+) is bound at residue T26. The segment at 60-64 is G2; it reads GITIN. Residues 81-84 form a G3 region; the sequence is DCPG. GTP contacts are provided by residues 81 to 85 and 136 to 139; these read DCPGH and NKVD. The tract at residues 136–139 is G4; sequence NKVD. Residues 174–176 form a G5 region; it reads SAL.

The protein belongs to the TRAFAC class translation factor GTPase superfamily. Classic translation factor GTPase family. EF-Tu/EF-1A subfamily. Monomer.

Its subcellular location is the cytoplasm. It catalyses the reaction GTP + H2O = GDP + phosphate + H(+). Its function is as follows. GTP hydrolase that promotes the GTP-dependent binding of aminoacyl-tRNA to the A-site of ribosomes during protein biosynthesis. The protein is Elongation factor Tu of Staphylococcus epidermidis (strain ATCC 35984 / DSM 28319 / BCRC 17069 / CCUG 31568 / BM 3577 / RP62A).